Here is a 171-residue protein sequence, read N- to C-terminus: S-ribosylhomocysteine lyase (171 aa).

Positions 54, 58, and 128 each coordinate Fe cation.

It belongs to the LuxS family. As to quaternary structure, homodimer. Fe cation is required as a cofactor.

It catalyses the reaction S-(5-deoxy-D-ribos-5-yl)-L-homocysteine = (S)-4,5-dihydroxypentane-2,3-dione + L-homocysteine. Involved in the synthesis of autoinducer 2 (AI-2) which is secreted by bacteria and is used to communicate both the cell density and the metabolic potential of the environment. The regulation of gene expression in response to changes in cell density is called quorum sensing. Catalyzes the transformation of S-ribosylhomocysteine (RHC) to homocysteine (HC) and 4,5-dihydroxy-2,3-pentadione (DPD). The protein is S-ribosylhomocysteine lyase of Serratia proteamaculans (strain 568).